The primary structure comprises 257 residues: UPF0246 protein BAV2675 (257 aa).

Belongs to the UPF0246 family.

This Bordetella avium (strain 197N) protein is UPF0246 protein BAV2675.